An 804-amino-acid chain; its full sequence is Phenylalanine--tRNA ligase beta subunit (804 aa).

A tRNA-binding domain is found at Gly-39–Ala-147. Positions Glu-402–Val-480 constitute a B5 domain. Mg(2+)-binding residues include Asp-458, Asp-464, Glu-467, and Glu-468. Residues Ser-711–Arg-804 form the FDX-ACB domain.

Belongs to the phenylalanyl-tRNA synthetase beta subunit family. Type 1 subfamily. In terms of assembly, tetramer of two alpha and two beta subunits. The cofactor is Mg(2+).

Its subcellular location is the cytoplasm. The catalysed reaction is tRNA(Phe) + L-phenylalanine + ATP = L-phenylalanyl-tRNA(Phe) + AMP + diphosphate + H(+). The sequence is that of Phenylalanine--tRNA ligase beta subunit from Syntrophus aciditrophicus (strain SB).